Reading from the N-terminus, the 380-residue chain is Cytochrome b (380 aa).

The next 4 membrane-spanning stretches (helical) occupy residues 33–53, 77–98, 113–133, and 178–198; these read FGSLLGLCLLTQILTGLFLAM, WLIRNFHANGASFFFICLYLHI, WNVGVVLFLLVMMTAFVGYVL, and FFAFHFLFPFIIAAMTILHFL. Heme b-binding residues include His83 and His97. 2 residues coordinate heme b: His182 and His196. His201 is a binding site for a ubiquinone. Transmembrane regions (helical) follow at residues 226-246, 288-308, 320-340, and 347-367; these read YKDLLGFVVMLLALSTLSLFS, LGGVLALLSSILILMLVPILH, LTQILFWVLVADVAILTWIGG, and FIIVGQVASVLYFALFLVIMP.

The protein belongs to the cytochrome b family. In terms of assembly, the cytochrome bc1 complex contains 3 respiratory subunits (MT-CYB, CYC1 and UQCRFS1), 2 core proteins (UQCRC1 and UQCRC2) and probably 6 low-molecular weight proteins. Requires heme b as cofactor.

Its subcellular location is the mitochondrion inner membrane. Its function is as follows. Component of the ubiquinol-cytochrome c reductase complex (complex III or cytochrome b-c1 complex) that is part of the mitochondrial respiratory chain. The b-c1 complex mediates electron transfer from ubiquinol to cytochrome c. Contributes to the generation of a proton gradient across the mitochondrial membrane that is then used for ATP synthesis. The sequence is that of Cytochrome b (mt-cyb) from Zeus faber (John Dory).